The following is a 101-amino-acid chain: Small ribosomal subunit protein uS14 (101 aa).

The protein belongs to the universal ribosomal protein uS14 family. Part of the 30S ribosomal subunit. Contacts proteins S3 and S10.

Functionally, binds 16S rRNA, required for the assembly of 30S particles and may also be responsible for determining the conformation of the 16S rRNA at the A site. This Synechococcus sp. (strain JA-3-3Ab) (Cyanobacteria bacterium Yellowstone A-Prime) protein is Small ribosomal subunit protein uS14.